The following is a 186-amino-acid chain: Centromere protein M (186 aa).

The protein localises to the nucleus. It is found in the chromosome. The protein resides in the centromere. Probable component of a centromeric complex involved in assembly of kinetochore proteins, mitotic progression and chromosome segregation. The polypeptide is Centromere protein M (cenpm) (Danio rerio (Zebrafish)).